The primary structure comprises 306 residues: MEVTFFGTSAGLPTKERNTQAIALNLEPYSNSIWLFDVGEGTQHQILHHAIKLGKVTHIFITHMHGDHIFGLPGLLSSRSFQGGEQKPLTLVGPKGIKAYVEMSMNLSESHLNYPITYIEIDDHLTYHHDGFTVEAHLLNHGIPSYGYRVMAPETTGTINVEALKNIGLEPGPKYQEVKSHDTFEHNGQVYQSKDFRGESKQGPVVAIFGDTKPCSNERVISRDADVMVHEATYIDGEKHLANNYHHSHIEDVFALIKEANVKRTLITHLSNRYNTEDINEIYQILIQNEDTPNFNFVKDFDSFKV.

Zn(2+) contacts are provided by H63, H65, D67, H68, H141, D211, and H269. D67 functions as the Proton acceptor in the catalytic mechanism.

It belongs to the RNase Z family. As to quaternary structure, homodimer. It depends on Zn(2+) as a cofactor.

The catalysed reaction is Endonucleolytic cleavage of RNA, removing extra 3' nucleotides from tRNA precursor, generating 3' termini of tRNAs. A 3'-hydroxy group is left at the tRNA terminus and a 5'-phosphoryl group is left at the trailer molecule.. Zinc phosphodiesterase, which displays some tRNA 3'-processing endonuclease activity. Probably involved in tRNA maturation, by removing a 3'-trailer from precursor tRNA. The protein is Ribonuclease Z of Staphylococcus aureus (strain Mu3 / ATCC 700698).